Here is a 77-residue protein sequence, read N- to C-terminus: Large ribosomal subunit protein bL28 (77 aa).

The protein belongs to the bacterial ribosomal protein bL28 family.

The protein is Large ribosomal subunit protein bL28 of Polaromonas sp. (strain JS666 / ATCC BAA-500).